Here is a 451-residue protein sequence, read N- to C-terminus: Phosphoglucosamine mutase (451 aa).

The Phosphoserine intermediate role is filled by Ser103. Mg(2+) is bound by residues Ser103, Asp243, Asp245, and Asp247. Position 103 is a phosphoserine (Ser103).

It belongs to the phosphohexose mutase family. Requires Mg(2+) as cofactor. In terms of processing, activated by phosphorylation.

It carries out the reaction alpha-D-glucosamine 1-phosphate = D-glucosamine 6-phosphate. In terms of biological role, catalyzes the conversion of glucosamine-6-phosphate to glucosamine-1-phosphate. This is Phosphoglucosamine mutase from Lactiplantibacillus plantarum (strain ATCC BAA-793 / NCIMB 8826 / WCFS1) (Lactobacillus plantarum).